A 160-amino-acid chain; its full sequence is Invasion protein IagB (160 aa).

Positions 1–19 are cleaved as a signal peptide; that stretch reads MHYFFIIVIWLLSINTAWA.

It belongs to the IagB/IpgF/P19 family.

The polypeptide is Invasion protein IagB (iagB) (Salmonella typhi).